A 130-amino-acid polypeptide reads, in one-letter code: MAQVQFLGTGRRKKSVARVRLVPGDGKFLINNRSLMEYFGKKTLEMIVRQPLELTKSEGRFDVLCNVHGGGTSGQAGAIRLGIARALLKADIGLRPVLKRAGFLTRDPRAKERKKYGLKAARRAPQFSKR.

Residues 109 to 130 (RAKERKKYGLKAARRAPQFSKR) form a disordered region. Residues 111–130 (KERKKYGLKAARRAPQFSKR) are compositionally biased toward basic residues.

Belongs to the universal ribosomal protein uS9 family.

The sequence is that of Small ribosomal subunit protein uS9 from Heliobacterium modesticaldum (strain ATCC 51547 / Ice1).